A 592-amino-acid chain; its full sequence is MAPPVAERGLKSVVWQKIKATVFDDCKKEGEWKIMLLDEFTTKLLASCCKMTDLLEEGITVVENIYKNREPVRQMKALYFITPTSKSVDCFLHDFASKSENKYKAAYIYFTDFCPDNLFNKIKASCSKSIRRCKEINISFIPHESQVYTLDVPDAFYYCYSPDPGNAKGKDAIMETMADQIVTVCATLDENPGVRYKSKPLDNASKLAQLVEKKLEDYYKIDEKSLIKGKTHSQLLIIDRGFDPVSTVLHELTFQAMAYDLLPIENDTYKYKTDGKEKEAILEEEDDLWVRIRHRHIAVVLEEIPKLMKEISSTKKATEGKTSLSALTQLMKKMPHFRKQITKQVVHLNLAEDCMNKFKLNIEKLCKTEQDLALGTDAEGQKVKDSMRVLLPVLLNKNHDNCDKIRAILLYIFSINGTTEENLDRLIQNVKIENESDMIRNWSYLGVPIVPQSQQGKPLRKDRSAEETFQLSRWTPFIKDIMEDAIDNRLDSKEWPYCSQCPAVWNGSGAVSARQKPRANYLEDRKNGSKLIVFVIGGITYSEVRCAYEVSQAHKSCEVIIGSTHVLTPKKLLDDIKMLNKPKDKVSLIKDE.

The tract at residues 1 to 255 (MAPPVAERGL…STVLHELTFQ (255 aa)) is mediates interaction with DOC2B.

This sequence belongs to the STXBP/unc-18/SEC1 family. Interacts with DOC2B; the interaction is direct, occurs at the cell membrane, excludes interaction with STX4 and regulates glucose-stimulated insulin secretion. Interacts with STX4. Phosphorylated by PKC in platelets in response to thrombin stimulation; phosphorylation inhibits binding to STX4. As to expression, megakaryocytes and platelets.

It is found in the cytoplasm. The protein resides in the cytosol. The protein localises to the cell membrane. Together with STX4 and VAMP2, may play a role in insulin-dependent movement of GLUT4 and in docking/fusion of intracellular GLUT4-containing vesicles with the cell surface in adipocytes. This Homo sapiens (Human) protein is Syntaxin-binding protein 3 (STXBP3).